The chain runs to 377 residues: Transmembrane protein 237A (377 aa).

Basic and acidic residues-rich tracts occupy residues 1–11 (MCVTSRADKMP), 43–64 (LESRRQSESREPLTPEPHDNPP), and 74–87 (HTFENEGEQQDHPN). Residues 1-124 (MCVTSRADKM…NQSHNELGVE (124 aa)) are disordered. 4 consecutive transmembrane segments (helical) span residues 198–218 (IIGLFSHGFLAGYAVWNIIVV), 239–259 (LAYPAQSLLYLLLAISTVSAF), 273–293 (GFLTLDPAALASFLYFAALIL), and 326–346 (PWIVVNLVVALLVGLAWVFVA).

The protein belongs to the TMEM237 family.

Its subcellular location is the membrane. It is found in the cell projection. The protein resides in the cilium. Component of the transition zone in primary cilia. Required for ciliogenesis. The sequence is that of Transmembrane protein 237A (tmem237a) from Danio rerio (Zebrafish).